A 675-amino-acid chain; its full sequence is Protein distal antenna (675 aa).

The HTH psq-type domain occupies 5–56 (TKGKRPLRHLTATDKIDAIQRIHDGESKASVARDIGVPESTLRGWCKNEEKL). The H-T-H motif DNA-binding region spans 32–52 (KASVARDIGVPESTLRGWCKN). Disordered regions lie at residues 239–269 (QSLR…KNPS), 337–393 (LYSS…PEDT), 458–534 (LNII…SKCN), 546–596 (FQNP…AHKS), and 655–675 (ERQQ…RRRK). Low complexity predominate over residues 339 to 368 (SSMPRPSSPQQSSSPPQQHQQVQHHPSTQT). Over residues 369–384 (PTPPIVSTPQPTPPSS) the composition is skewed to pro residues. A compositionally biased stretch (basic and acidic residues) spans 469 to 478 (VKSEPEDLSN). Residues 479-493 (HNHSSSNAAAVAAPA) show a composition bias toward low complexity. Polar residues predominate over residues 499 to 508 (FNPSPSTSAK). Positions 513 to 528 (QEDDEEQAGPADDESP) are enriched in acidic residues. The segment covering 559 to 579 (NLSIRSNNSPRRRSVSPAVSN) has biased composition (low complexity).

In terms of assembly, homomers. Interacts with itself, danr, ey and dac to form a complex (or complexes) containing the RD factors.

It is found in the nucleus. Functionally, probable transcription factor with a role in the retinal determination (RD) network. Contributes to differentiation of antenna-specific characteristics. This chain is Protein distal antenna, found in Aedes aegypti (Yellowfever mosquito).